A 336-amino-acid polypeptide reads, in one-letter code: tRNA(Ile)-lysidine synthase (336 aa).

21–26 (SGGLDS) serves as a coordination point for ATP.

This sequence belongs to the tRNA(Ile)-lysidine synthase family.

It localises to the cytoplasm. It catalyses the reaction cytidine(34) in tRNA(Ile2) + L-lysine + ATP = lysidine(34) in tRNA(Ile2) + AMP + diphosphate + H(+). Functionally, ligates lysine onto the cytidine present at position 34 of the AUA codon-specific tRNA(Ile) that contains the anticodon CAU, in an ATP-dependent manner. Cytidine is converted to lysidine, thus changing the amino acid specificity of the tRNA from methionine to isoleucine. The polypeptide is tRNA(Ile)-lysidine synthase (Helicobacter pylori (strain ATCC 700392 / 26695) (Campylobacter pylori)).